The primary structure comprises 481 residues: MRWLWPLAVSLAVILAVGLSRVSGGAPLHLGRHRAETQEQQSRSKRGTEDEEAKGVQQYVPEEWAEYPRPIHPAGLQPTKPLVATSPNPGKDGGTPDSGQELRGNLTGAPGQRLQIQNPLYPVTESSYSAYAIMLLALVVFAVGIVGNLSVMCIVWHSYYLKSAWNSILASLALWDFLVLFFCLPIVIFNEITKQRLLGDVSCRAVPFMEVSSLGVTTFSLCALGIDRFHVATSTLPKVRPIERCQSILAKLAVIWVGSMTLAVPELLLWQLAQEPAPTMGTLDSCIMKPSASLPESLYSLVMTYQNARMWWYFGCYFCLPILFTVTCQLVTWRVRGPPGRKSECRASKHEQCESQLNSTVVGLTVVYAFCTLPENVCNIVVAYLSTELTRQTLDLLGLINQFSTFFKGAITPVLLLCICRPLGQAFLDCCCCCCCEECGGASEASAANGSDNKLKTEVSSSIYFHKPRESPPLLPLGTPC.

A signal peptide spans Met-1–Gly-25. Disordered stretches follow at residues Ala-26–Gln-58 and Pro-70–Gly-108. At Ala-26–Met-134 the chain is on the extracellular side. O-linked (GalNAc...) threonine glycosylation is found at Thr-79 and Thr-85. The O-linked (GalNAc...) serine glycan is linked to Ser-86. An O-linked (GalNAc...) threonine glycan is attached at Thr-95. Asn-105 carries N-linked (GlcNAc...) asparagine glycosylation. Thr-107 carries an O-linked (GalNAc...) threonine glycan. A helical transmembrane segment spans residues Leu-135 to Val-155. Over Trp-156–Ser-167 the chain is Cytoplasmic. Residues Ile-168–Ile-188 traverse the membrane as a helical segment. The Extracellular segment spans residues Phe-189–Ala-205. A disulfide bridge links Cys-203 with Cys-286. Residues Val-206–Ile-226 traverse the membrane as a helical segment. Residues Asp-227 to Lys-251 are Cytoplasmic-facing. Residues Leu-252 to Leu-272 form a helical membrane-spanning segment. Residues Ala-273 to Met-310 lie on the Extracellular side of the membrane. Residues Trp-311–Val-331 traverse the membrane as a helical segment. The Cytoplasmic segment spans residues Thr-332–Val-361. A helical transmembrane segment spans residues Val-362–Val-382. The Extracellular segment spans residues Ala-383 to Gly-398. A helical membrane pass occupies residues Leu-399 to Ile-419. Topologically, residues Cys-420–Cys-481 are cytoplasmic. Ser-471 bears the Phosphoserine mark. Phosphothreonine is present on Thr-479.

This sequence belongs to the G-protein coupled receptor 1 family. Interacts with the PTCH1 receptor. In terms of processing, O-glycosylated. Undergoes metalloprotease-mediated cleavage which reduces its constitutive activity. Post-translationally, ubiquitinated. Expressed in primary cortical astrocytes (at protein level). Expressed in the central nervous system.

Its subcellular location is the cell membrane. It is found in the cell projection. It localises to the cilium membrane. G-protein coupled receptor. Has been shown to bind the neuroprotective and glioprotective factor prosaposin (PSAP), leading to endocytosis followed by an ERK phosphorylation cascade. However, other studies have shown that prosaposin does not increase activity. It has been suggested that GPR37L1 is a constitutively active receptor which signals through the guanine nucleotide-binding protein G(s) subunit alpha. Participates in the regulation of postnatal cerebellar development by modulating the Shh pathway. Regulates baseline blood pressure in females and protects against cardiovascular stress in males. Mediates inhibition of astrocyte glutamate transporters and reduction in neuronal N-methyl-D-aspartate receptor activity. This is G-protein coupled receptor 37-like 1 (GPR37L1) from Homo sapiens (Human).